Here is a 1267-residue protein sequence, read N- to C-terminus: Ankyrin repeat and ELMO domain-containing protein D (1267 aa).

The 160-residue stretch at Ser-307 to Leu-466 folds into the ELMO domain. Residues Lys-486–Gly-496 show a composition bias toward basic and acidic residues. The tract at residues Lys-486–Leu-598 is disordered. The segment covering Gly-507 to Leu-598 has biased composition (low complexity). 4 ANK repeats span residues Asp-655–Thr-685, Gln-689–Ile-718, Thr-767–Asn-796, and Ser-801–Ile-830. Disordered stretches follow at residues Asn-854–Ser-908, Thr-924–Phe-1040, Ser-1057–Glu-1082, and Glu-1103–Asp-1215. 3 stretches are compositionally biased toward low complexity: residues Ser-859 to Ser-870, Ile-895 to Ser-908, and Thr-924 to Pro-1033. The segment covering Ser-1057–Gly-1080 has biased composition (polar residues). Low complexity-rich tracts occupy residues Asn-1108 to His-1176 and His-1184 to Pro-1213.

The sequence is that of Ankyrin repeat and ELMO domain-containing protein D (elmoD) from Dictyostelium discoideum (Social amoeba).